Consider the following 211-residue polypeptide: Large ribosomal subunit protein uL3 (211 aa).

Gln-150 is modified (N5-methylglutamine).

It belongs to the universal ribosomal protein uL3 family. As to quaternary structure, part of the 50S ribosomal subunit. Forms a cluster with proteins L14 and L19. In terms of processing, methylated by PrmB.

Its function is as follows. One of the primary rRNA binding proteins, it binds directly near the 3'-end of the 23S rRNA, where it nucleates assembly of the 50S subunit. This Pseudomonas entomophila (strain L48) protein is Large ribosomal subunit protein uL3.